Consider the following 434-residue polypeptide: Putative D-alanyl-D-alanine carboxypeptidase (434 aa).

The chain crosses the membrane as a helical; Signal-anchor span at residues 7–25; the sequence is YLSLLAVSCSVSAAKYPVL.

This sequence belongs to the peptidase S12 family. YfeW subfamily.

It is found in the cell inner membrane. It catalyses the reaction Preferential cleavage: (Ac)2-L-Lys-D-Ala-|-D-Ala. Also transpeptidation of peptidyl-alanyl moieties that are N-acyl substituents of D-alanine.. The protein is Putative D-alanyl-D-alanine carboxypeptidase of Escherichia coli O157:H7.